The sequence spans 495 residues: Ribose import ATP-binding protein RbsA 3 (495 aa).

2 ABC transporter domains span residues 5-240 and 250-492; these read VRLR…VGRE and AEIG…TGVK. 37–44 serves as a coordination point for ATP; that stretch reads GENGAGKS.

It belongs to the ABC transporter superfamily. Ribose importer (TC 3.A.1.2.1) family. In terms of assembly, the complex is composed of an ATP-binding protein (RbsA), two transmembrane proteins (RbsC) and a solute-binding protein (RbsB).

Its subcellular location is the cell membrane. It carries out the reaction D-ribose(out) + ATP + H2O = D-ribose(in) + ADP + phosphate + H(+). In terms of biological role, part of the ABC transporter complex RbsABC involved in ribose import. Responsible for energy coupling to the transport system. The polypeptide is Ribose import ATP-binding protein RbsA 3 (Rubrobacter xylanophilus (strain DSM 9941 / JCM 11954 / NBRC 16129 / PRD-1)).